Consider the following 343-residue polypeptide: MTITPQEALQRTIEHREIFHDEMLHLMRLIMRGDMSPVMAAAIITGLRVKKETIGEIAAAATVMREFARRVEVEDNANFVDIVGTGGDGSHTFNISTATMFVAAAAGAKVAKHGNRGVSSKSGSADVLEALGVNIDLQPEQVAASIAETGMGFMFAPNHHPAMRNIAPVRRELGVRTIFNILGPLTNPADAPNQLMGVFHPDLVGIQVRVMQRLGAQHVLVVYGKDGMDEVSLGAATLVGELRDGEVREYEIHPEDFGMQMVSNRTLKVESADESRVMLLEALGNKPGVAREIVTLNAGTALYSADVAGSIADGIQLARDAIASGRAREKVDELVRFTQQFKR.

Residues G84, 87–88 (GD), T92, 94–97 (NIST), 112–120 (KHGNRGVSS), and S124 contribute to the 5-phospho-alpha-D-ribose 1-diphosphate site. An anthranilate-binding site is contributed by G84. S96 contacts Mg(2+). Anthranilate is bound at residue N115. Position 170 (R170) interacts with anthranilate. Mg(2+) is bound by residues D229 and E230.

The protein belongs to the anthranilate phosphoribosyltransferase family. In terms of assembly, homodimer. Mg(2+) serves as cofactor.

The enzyme catalyses N-(5-phospho-beta-D-ribosyl)anthranilate + diphosphate = 5-phospho-alpha-D-ribose 1-diphosphate + anthranilate. The protein operates within amino-acid biosynthesis; L-tryptophan biosynthesis; L-tryptophan from chorismate: step 2/5. Functionally, catalyzes the transfer of the phosphoribosyl group of 5-phosphorylribose-1-pyrophosphate (PRPP) to anthranilate to yield N-(5'-phosphoribosyl)-anthranilate (PRA). The sequence is that of Anthranilate phosphoribosyltransferase from Burkholderia pseudomallei (strain 1106a).